Here is a 588-residue protein sequence, read N- to C-terminus: NADP-dependent malic enzyme 3 (588 aa).

The residue at position 2 (glycine 2) is an N-acetylglycine. Tyrosine 136 serves as the catalytic Proton donor. Arginine 189 is an NADP(+) binding site. The Proton acceptor role is filled by lysine 207. Residues glutamate 279, aspartate 280, and aspartate 303 each coordinate a divalent metal cation. Residues aspartate 303, leucine 332–alanine 348, and asparagine 444 each bind NADP(+).

This sequence belongs to the malic enzymes family. Homohexamers and homooctamers. The cofactor is Mg(2+). Mn(2+) serves as cofactor. As to expression, mostly expressed in flowers, and, to a lower extent, in stems. In leaves and stems, restricted to the trichomes and trichome basal cells. Also present in the stipules flanking the base of the inflorescence bract leaves and in the meristematic zone of developing lateral roots. In flowers, present in pollen and the abscission zone of developing siliques.

The protein resides in the cytoplasm. The enzyme catalyses (S)-malate + NADP(+) = pyruvate + CO2 + NADPH. It catalyses the reaction oxaloacetate + H(+) = pyruvate + CO2. With respect to regulation, slightly activated by succinate and aspartate. Repressed by fumarate, malate, oxaloacetate and glucose. The sequence is that of NADP-dependent malic enzyme 3 (NADP-ME3) from Arabidopsis thaliana (Mouse-ear cress).